The chain runs to 424 residues: Isoflavipucine cluster transcription factor ATEG_00326 (424 aa).

A DNA-binding region (zn(2)-C6 fungal-type) is located at residues 10–38 (CDRCHGQKLRCIHSGGGPCVRCAKAKATC). A disordered region spans residues 265 to 286 (ARMQTPEGTPERTSESSPSGPP).

Its subcellular location is the nucleus. Transcription factor that regulates the expression of the gene cluster that mediates the biosynthesis of isoflavipucine. In Aspergillus terreus (strain NIH 2624 / FGSC A1156), this protein is Isoflavipucine cluster transcription factor ATEG_00326.